The primary structure comprises 563 residues: Putative GMC-type oxidoreductase L128 (563 aa).

Residues 1 to 21 (MTSSIVLKFFLIATLLVIANS) form the signal peptide. 48-77 (DYVIVGGGAAGSVLLDKCISYGYKCTLIER) is a binding site for FAD. The active-site Proton acceptor is the H504.

It belongs to the GMC oxidoreductase family. FAD is required as a cofactor.

The polypeptide is Putative GMC-type oxidoreductase L128 (Acanthamoeba polyphaga mimivirus (APMV)).